We begin with the raw amino-acid sequence, 438 residues long: Forkhead box protein J1 (438 aa).

A DNA-binding region (fork-head) is located at residues 123–217; that stretch reads KPPYSYATLI…MNGAMKKRRL (95 aa).

Belongs to the FOXJ1 family.

It is found in the nucleus. In terms of biological role, key transcription factor required for motile ciliogenesis. Activates genes essential for motile cilia formation and function. This is Forkhead box protein J1 from Xenopus tropicalis (Western clawed frog).